Consider the following 295-residue polypeptide: Mycothiol acetyltransferase (295 aa).

Glutamate 30 serves as a coordination point for 1D-myo-inositol 2-(L-cysteinylamino)-2-deoxy-alpha-D-glucopyranoside. Residue 62-64 coordinates acetyl-CoA; sequence LVV. The 159-residue stretch at 137–295 folds into the N-acetyltransferase domain; that stretch reads VTVRAFRADS…DDDTHVQYRR (159 aa). Residues glutamate 165, lysine 209, and glutamate 227 each coordinate 1D-myo-inositol 2-(L-cysteinylamino)-2-deoxy-alpha-D-glucopyranoside. Residues 231–233 and 238–244 each bind acetyl-CoA; these read VGI and QGRGLGK. Residue tyrosine 265 participates in 1D-myo-inositol 2-(L-cysteinylamino)-2-deoxy-alpha-D-glucopyranoside binding.

This sequence belongs to the acetyltransferase family. MshD subfamily. As to quaternary structure, monomer.

The enzyme catalyses 1D-myo-inositol 2-(L-cysteinylamino)-2-deoxy-alpha-D-glucopyranoside + acetyl-CoA = mycothiol + CoA + H(+). Catalyzes the transfer of acetyl from acetyl-CoA to desacetylmycothiol (Cys-GlcN-Ins) to form mycothiol. In Nocardioides sp. (strain ATCC BAA-499 / JS614), this protein is Mycothiol acetyltransferase.